The sequence spans 245 residues: Thiamine phosphate phosphatase-like protein (245 aa).

The active-site Nucleophile is the Asp-9. Asp-9, Asp-11, and Asp-179 together coordinate Mg(2+). Asp-11 serves as the catalytic Proton donor.

This sequence belongs to the HAD-like hydrolase superfamily. As to quaternary structure, monomer. Requires Mg(2+) as cofactor.

The enzyme catalyses thiamine phosphate + H2O = thiamine + phosphate. In terms of biological role, HAD-like hydrolase that has a thiamine monophosphate phosphatase activity in a heterologous system. Does not contribute to thiamine monophosphate phosphatase activity in planta. This Arabidopsis thaliana (Mouse-ear cress) protein is Thiamine phosphate phosphatase-like protein.